Here is a 920-residue protein sequence, read N- to C-terminus: GTPase activating protein homolog 1 (920 aa).

The segment covering 65–87 (NLGGLSNDSTNNNSNSNNTIDSS) has biased composition (low complexity). The segment at 65-91 (NLGGLSNDSTNNNSNSNNTIDSSKPLS) is disordered. In terms of domain architecture, F-BAR spans 90-344 (LSFENDMSDG…FVDIIDPEVD (255 aa)). A coiled-coil region spans residues 184–276 (LNEAIKDMEK…EDEYKEQINE (93 aa)). Over residues 403-449 (TNTITSQSGSTIISNGASQPIEIPSPQPISEQQQIPPQQQQQQQQAQ) the composition is skewed to low complexity. Disordered regions lie at residues 403-468 (TNTI…PMGR) and 490-518 (STSSLLTKDGNSTTSSNTSTSNSNQLSKS). The span at 450–468 (VPPTSINQSSSPPVNPMGR) shows a compositional bias: polar residues. Over residues 490 to 513 (STSSLLTKDGNSTTSSNTSTSNSN) the composition is skewed to low complexity. In terms of domain architecture, Rho-GAP spans 533–716 (VELEVLIEND…NMIIDSLETK (184 aa)). Residues 727–836 (PIIPDDENSD…VSSNGNNINS (110 aa)) form a disordered region. Residues 730-741 (PDDENSDDDDDD) are compositionally biased toward acidic residues. Low complexity predominate over residues 757-836 (NDINTTNINN…VSSNGNNINS (80 aa)).

The protein resides in the cytoplasm. Its subcellular location is the contractile vacuole. Its function is as follows. Rho GTPase-activating protein involved in the signal transduction pathway. Regulator of the contractile vacuole network as well as involved in driving vacuole emptying. The polypeptide is GTPase activating protein homolog 1 (mgp1) (Dictyostelium discoideum (Social amoeba)).